Here is a 230-residue protein sequence, read N- to C-terminus: Fibrillarin-like rRNA/tRNA 2'-O-methyltransferase (230 aa).

Residues 87 to 88 (TT), 105 to 106 (EF), 130 to 131 (DA), and 150 to 153 (DVAQ) contribute to the S-adenosyl-L-methionine site.

It belongs to the methyltransferase superfamily. Fibrillarin family. In terms of assembly, interacts with nop5. Component of box C/D small ribonucleoprotein (sRNP) particles that contain rpl7ae, FlpA and nop5, plus a guide RNA.

Functionally, involved in pre-rRNA and tRNA processing. Utilizes the methyl donor S-adenosyl-L-methionine to catalyze the site-specific 2'-hydroxyl methylation of ribose moieties in rRNA and tRNA. Site specificity is provided by a guide RNA that base pairs with the substrate. Methylation occurs at a characteristic distance from the sequence involved in base pairing with the guide RNA. This chain is Fibrillarin-like rRNA/tRNA 2'-O-methyltransferase, found in Methanococcus maripaludis (strain C5 / ATCC BAA-1333).